Here is a 474-residue protein sequence, read N- to C-terminus: tRNA-2-methylthio-N(6)-dimethylallyladenosine synthase (474 aa).

Residues 3–120 (QKLHIKTWGC…LPEMINQIRG (118 aa)) form the MTTase N-terminal domain. [4Fe-4S] cluster contacts are provided by Cys-12, Cys-49, Cys-83, Cys-157, Cys-161, and Cys-164. The Radical SAM core domain occupies 143–375 (RAEGPTAFVS…QERINQQAAQ (233 aa)). One can recognise a TRAM domain in the interval 378 to 441 (RRMLGTEQRV…TNSLRGEVVR (64 aa)).

This sequence belongs to the methylthiotransferase family. MiaB subfamily. As to quaternary structure, monomer. [4Fe-4S] cluster serves as cofactor.

It localises to the cytoplasm. It catalyses the reaction N(6)-dimethylallyladenosine(37) in tRNA + (sulfur carrier)-SH + AH2 + 2 S-adenosyl-L-methionine = 2-methylsulfanyl-N(6)-dimethylallyladenosine(37) in tRNA + (sulfur carrier)-H + 5'-deoxyadenosine + L-methionine + A + S-adenosyl-L-homocysteine + 2 H(+). Functionally, catalyzes the methylthiolation of N6-(dimethylallyl)adenosine (i(6)A), leading to the formation of 2-methylthio-N6-(dimethylallyl)adenosine (ms(2)i(6)A) at position 37 in tRNAs that read codons beginning with uridine. This chain is tRNA-2-methylthio-N(6)-dimethylallyladenosine synthase, found in Haemophilus influenzae (strain PittEE).